A 119-amino-acid chain; its full sequence is Protein yippee-like 2 (119 aa).

The 98-residue stretch at 19 to 116 (RTYSCIHCRA…IELAHMIKDN (98 aa)) folds into the Yippee domain. Residues cysteine 23, cysteine 26, cysteine 79, and cysteine 82 each coordinate Zn(2+).

Belongs to the yippee family. May interact with FAM168B.

The protein resides in the nucleus. The protein localises to the nucleolus. This chain is Protein yippee-like 2 (YPEL2), found in Chlorocebus aethiops (Green monkey).